Here is a 415-residue protein sequence, read N- to C-terminus: Coiled-coil domain-containing glutamate-rich protein 1 (415 aa).

Residues 1–11 (MTQTLDTKEDP) are compositionally biased toward basic and acidic residues. Disordered regions lie at residues 1 to 20 (MTQT…GWAS), 29 to 64 (FGPR…QQYG), 133 to 162 (RPPG…SPPV), 202 to 241 (QEKL…GQED), and 255 to 372 (PSLV…PLEM). Basic residues-rich tracts occupy residues 31–46 (PRRR…RPRY) and 135–156 (PGRK…RRSA). Coiled coils occupy residues 197-224 (EDMR…STAS) and 264-366 (DEEK…EEEN). Low complexity predominate over residues 211 to 220 (ALRAQQAQAA). Acidic residues predominate over residues 275 to 363 (VEEEEEGERE…EGLAEDEQTE (89 aa)).

Its subcellular location is the nucleus. Its function is as follows. Regulator of histone epigenetic modifications and chromatin compaction into the sperm head, required for histone-to-protamine (HTP) transition. HTP is a key event in which somatic histones are first replaced by testis-specific histone variants, then transition proteins (TNPs) are incorporated into the spermatid nucleus, and finally protamines (PRMs) replace the TNPs to promote chromatin condensation. This chain is Coiled-coil domain-containing glutamate-rich protein 1 (CCER1), found in Bos taurus (Bovine).